The following is a 436-amino-acid chain: MSETYVSEKSPGVMASGAELIRAADIQTAQARISSVIAPTPLQYCPRLSEETGAEIYLKREDLQDVRSYKIRGALNSGAQLTQEQRDAGIVAASAGNHAQGVAYVCKSLGVQGRIYVPVQTPKQKRDRIMVHGGEFVSLVVTGNNFDEASAAAHEDAERTGATLIEPFDARNTVIGQGTVAAEILSQLTSMGKSADHVMVPVGGGGLLAGVVSYMADMAPRTAIVGIEPAGAASMQAALHNGGPITLETVDPFVDGAAVKRVGDLNYTIVEKNQGRVHMMSATEGAVCTEMLDLYQNEGIIAEPAGALSIAGLKEMSFAPGSVVVCIISGGNNDVLRYAEIAERSLVHRGLKHYFLVNFPQKPGQLRHFLEDILGPDDDITLFEYLKRNNRETGTALVGIHLSEASGLDSLLERMEESAIDSRRLEPGTPEYEYLT.

The catalytic stretch occupies residues 1-357; it reads MSETYVSEKS…HRGLKHYFLV (357 aa). At Lys-70 the chain carries N6-(pyridoxal phosphate)lysine. Residues Asn-97, 203-207, and Ser-329 contribute to the pyridoxal 5'-phosphate site; that span reads GGGGL. The 75-residue stretch at 353-427 folds into the ACT-like domain; it reads HYFLVNFPQK…SAIDSRRLEP (75 aa). The interval 358-436 is regulatory; the sequence is NFPQKPGQLR…PGTPEYEYLT (79 aa).

The protein belongs to the serine/threonine dehydratase family. In terms of assembly, homotetramer. The cofactor is pyridoxal 5'-phosphate.

The enzyme catalyses L-threonine = 2-oxobutanoate + NH4(+). The protein operates within amino-acid biosynthesis; L-isoleucine biosynthesis; 2-oxobutanoate from L-threonine: step 1/1. Functionally, catalyzes the anaerobic formation of alpha-ketobutyrate and ammonia from threonine in a two-step reaction. The first step involved a dehydration of threonine and a production of enamine intermediates (aminocrotonate), which tautomerizes to its imine form (iminobutyrate). Both intermediates are unstable and short-lived. The second step is the nonenzymatic hydrolysis of the enamine/imine intermediates to form 2-ketobutyrate and free ammonia. In the low water environment of the cell, the second step is accelerated by RidA. In Corynebacterium glutamicum (strain ATCC 13032 / DSM 20300 / JCM 1318 / BCRC 11384 / CCUG 27702 / LMG 3730 / NBRC 12168 / NCIMB 10025 / NRRL B-2784 / 534), this protein is L-threonine dehydratase biosynthetic IlvA (ilvA).